Reading from the N-terminus, the 121-residue chain is Large ribosomal subunit protein bL21 (121 aa).

It belongs to the bacterial ribosomal protein bL21 family. As to quaternary structure, part of the 50S ribosomal subunit. Contacts protein L20.

Functionally, this protein binds to 23S rRNA in the presence of protein L20. The polypeptide is Large ribosomal subunit protein bL21 (Synechococcus sp. (strain CC9605)).